We begin with the raw amino-acid sequence, 517 residues long: Gallate 1-beta-glucosyltransferase 84A24 (517 aa).

His19 functions as the Proton acceptor in the catalytic mechanism. His19 serves as a coordination point for an anthocyanidin. Positions 344, 359, 362, 363, 364, and 367 each coordinate UDP-alpha-D-glucose. Residue Gly382 participates in an anthocyanidin binding. Residues Asp383 and Gln384 each contribute to the UDP-alpha-D-glucose site.

It belongs to the UDP-glycosyltransferase family. As to expression, highly expressed in leaf. Also expressed in peel, stem, root and aril.

The protein resides in the cytoplasm. The enzyme catalyses 3,4,5-trihydroxybenzoate + UDP-alpha-D-glucose = 1-O-galloyl-beta-D-glucose + UDP. The catalysed reaction is 3,4-dihydroxybenzoate + UDP-alpha-D-glucose = 1-O-(3,4-dihydroxy-benzoyl)-beta-D-glucose + UDP. It catalyses the reaction 4-hydroxybenzoate + UDP-alpha-D-glucose = 4-(beta-D-glucosyloxy)benzoate + UDP + H(+). It carries out the reaction (E)-cinnamate + UDP-alpha-D-glucose = 1-O-(trans-cinnamoyl)-beta-D-glucose + UDP. The enzyme catalyses (E)-sinapate + UDP-alpha-D-glucose = 1-O-(trans-sinapoyl)-beta-D-glucose + UDP. The catalysed reaction is (E)-4-coumarate + UDP-alpha-D-glucose = 1-O-(trans-4-coumaroyl)-beta-D-glucose + UDP. It catalyses the reaction (E)-caffeate + UDP-alpha-D-glucose = 1-O-[(E)-caffeoyl]-beta-D-glucose + UDP. It carries out the reaction (E)-ferulate + UDP-alpha-D-glucose = 1-O-[(E)-feruloyl]-beta-D-glucose + UDP. The enzyme catalyses genistein + UDP-alpha-D-glucose = genistein 7-O-beta-D-glucoside + UDP + H(+). The catalysed reaction is apigenin + UDP-alpha-D-glucose = apigenin 7-O-beta-D-glucoside + UDP + H(+). It catalyses the reaction luteolin + UDP-alpha-D-glucose = luteolin 7-O-beta-D-glucoside + UDP + H(+). Its function is as follows. Glucosyltransferase that catalyzes the formation of 1-O-beta-D-glucose esters with hydroxybenzoic acids and cinnamic acid including its derivatives as preferred glucosyl acceptors. Has significant activity with gallic acid (3,4,5-trihydroxybenzoic acid), 3,4-dihydroxybenzoic acid, 4-hydroxybenzoic acid, cinnamic acid, sinapic acid, coumaric acid, caffeic acid and ferulic acid in vitro. Gallic acid is the predicted native substrate of the enzyme, which thus catalyzes the formation of 1-O-galloyl-beta-D-glucose, the first committed step of hydrolyzable tannins (HTs) biosynthesis, with punicalagin isomers being the major HTs of pomegranate. Catalyzes the formation of flavonoid glucosides with genistein, apigenin and luteolin in vitro. Has low activity with benzoic acid, 2-hydroxybenzoic acid, 3-hydroxybenzoic acid, 2,4-dihydroxybenzoic acid, naringenin and quercetin. No activity with catechol, resveratrol, chlorogenic acid, catechin and epicatechin (building blocks of proanthocyanidins) or cyanidin, delphinidin and pelargonidin (the three anthocyanidins). The polypeptide is Gallate 1-beta-glucosyltransferase 84A24 (Punica granatum (Pomegranate)).